The chain runs to 627 residues: 1-deoxy-D-xylulose-5-phosphate synthase (627 aa).

Thiamine diphosphate is bound by residues H80 and G121–S123. D152 contributes to the Mg(2+) binding site. Thiamine diphosphate is bound by residues G153–A154, N181, Y288, and E370. N181 provides a ligand contact to Mg(2+).

The protein belongs to the transketolase family. DXPS subfamily. In terms of assembly, homodimer. Mg(2+) serves as cofactor. Thiamine diphosphate is required as a cofactor.

The enzyme catalyses D-glyceraldehyde 3-phosphate + pyruvate + H(+) = 1-deoxy-D-xylulose 5-phosphate + CO2. The protein operates within metabolic intermediate biosynthesis; 1-deoxy-D-xylulose 5-phosphate biosynthesis; 1-deoxy-D-xylulose 5-phosphate from D-glyceraldehyde 3-phosphate and pyruvate: step 1/1. Its function is as follows. Catalyzes the acyloin condensation reaction between C atoms 2 and 3 of pyruvate and glyceraldehyde 3-phosphate to yield 1-deoxy-D-xylulose-5-phosphate (DXP). This Aliivibrio salmonicida (strain LFI1238) (Vibrio salmonicida (strain LFI1238)) protein is 1-deoxy-D-xylulose-5-phosphate synthase.